A 365-amino-acid chain; its full sequence is Peptide chain release factor 2 (365 aa).

Q249 bears the N5-methylglutamine mark.

Belongs to the prokaryotic/mitochondrial release factor family. Post-translationally, methylated by PrmC. Methylation increases the termination efficiency of RF2.

The protein localises to the cytoplasm. Functionally, peptide chain release factor 2 directs the termination of translation in response to the peptide chain termination codons UGA and UAA. This Acholeplasma laidlawii (strain PG-8A) protein is Peptide chain release factor 2.